We begin with the raw amino-acid sequence, 756 residues long: Xylosyl- and glucuronyltransferase LARGE1 (756 aa).

Residues 1–10 (MLGICRGRRK) lie on the Cytoplasmic side of the membrane. Residues 11–31 (FLAASLTVLFVPAVTWIYLFA) traverse the membrane as a helical; Signal-anchor for type II membrane protein segment. Topologically, residues 32–756 (GSFEDGKPVS…LKYLTAENNS (725 aa)) are lumenal. Disordered stretches follow at residues 42–63 (LSPL…RDRE) and 81–109 (KQLS…EGTG). The segment covering 44-58 (PLESQPHSPRYTASS) has biased composition (polar residues). The stretch at 55 to 90 (TASSQRDRESLEVRMREVEEENRVLRKQLSLAQGRS) forms a coiled coil. N-linked (GlcNAc...) asparagine glycosylation is found at Asn97, Asn122, and Asn148. Residues 138–413 (IHVAIVCAGY…FLEYDGNLLR (276 aa)) are xylosyltransferase activity. 2 residues coordinate Mn(2+): Asp242 and Asp244. Asn272 carries N-linked (GlcNAc...) asparagine glycosylation. The segment at 414–756 (RELFGCPSEA…LKYLTAENNS (343 aa)) is glucuronyltransferase activity. Mn(2+) contacts are provided by Asp563 and Asp565.

In the C-terminal section; belongs to the glycosyltransferase 49 family. This sequence in the N-terminal section; belongs to the glycosyltransferase 8 family. Mn(2+) serves as cofactor.

It localises to the golgi apparatus membrane. It catalyses the reaction 3-O-[beta-D-GlcA-(1-&gt;3)-beta-D-Xyl-(1-&gt;4)-Rib-ol-P-Rib-ol-P-3-beta-D-GalNAc-(1-&gt;3)-beta-D-GlcNAc-(1-&gt;4)-(O-6-P-alpha-D-Man)]-Thr-[protein] + UDP-alpha-D-xylose = 3-O-[alpha-D-Xyl-(1-&gt;3)-beta-D-GlcA-(1-&gt;4)-beta-D-Xyl-(1-&gt;4)-Rib-ol-P-Rib-ol-P-3-beta-D-GalNAc-(1-&gt;3)-beta-D-GlcNAc-(1-&gt;4)-(O-6-P-alpha-D-Man)]-Thr-[protein] + UDP + H(+). The catalysed reaction is 3-O-{(1-&gt;[3)-alpha-D-Xyl-(1-&gt;3)-beta-D-GlcA-(1-&gt;](n)-4)-beta-D-Xyl-(1-&gt;4)-Rib-ol-P-Rib-ol-P-3-beta-D-GalNAc-(1-&gt;3)-beta-D-GlcNAc-(1-&gt;4)-O-6-P-alpha-D-Man}-L-Thr-[protein] + UDP-alpha-D-glucuronate = 3-O-{beta-D-GlcA-(1-&gt;[3)-alpha-D-Xyl-(1-&gt;3)-beta-D-GlcA-(1-&gt;](n)-4)-beta-D-Xyl-(1-&gt;4)-Rib-ol-P-Rib-ol-P-3-beta-D-GalNAc-(1-&gt;3)-beta-D-GlcNAc-(1-&gt;4)-O-6-P-alpha-D-Man}-L-Thr-[protein] + UDP + H(+). It carries out the reaction 3-O-{beta-D-GlcA-(1-&gt;[3)-alpha-D-Xyl-(1-&gt;3)-beta-D-GlcA-(1-&gt;](n)-4)-beta-D-Xyl-(1-&gt;4)-Rib-ol-P-Rib-ol-P-3-beta-D-GalNAc-(1-&gt;3)-beta-D-GlcNAc-(1-&gt;4)-O-6-P-alpha-D-Man}-L-Thr-[protein] + UDP-alpha-D-xylose = 3-O-{(1-&gt;[3)-alpha-D-Xyl-(1-&gt;3)-beta-D-GlcA-(1-&gt;](n+1)-4)-beta-D-Xyl-(1-&gt;4)-Rib-ol-P-Rib-ol-P-3-beta-D-GalNAc-(1-&gt;3)-beta-D-GlcNAc-(1-&gt;4)-O-6-P-alpha-D-Man}-L-Thr-[protein] + UDP + H(+). Its pathway is protein modification; protein glycosylation. In terms of biological role, bifunctional glycosyltransferase with both alpha-1,3-xylosyltransferase and beta-1,3-glucuronyltransferase activities involved in the maturation of alpha-dystroglycan (DAG1) by glycosylation leading to DAG1 binding to laminin G-like domain-containing extracellular proteins with high affinity. Elongates the glucuronyl-beta-1,4-xylose-beta disaccharide primer structure initiated by B4GAT1 by adding repeating units [-3-Xylose-alpha-1,3-GlcA-beta-1-] to produce a heteropolysaccharide. Requires the phosphorylation of core M3 (O-mannosyl trisaccharide) by POMK to elongate the glucuronyl-beta-1,4-xylose-beta disaccharide primer. Plays a key role in skeletal muscle function and regeneration. This is Xylosyl- and glucuronyltransferase LARGE1 from Gallus gallus (Chicken).